A 197-amino-acid chain; its full sequence is Adenylyl-sulfate kinase (197 aa).

33 to 40 (GLSGSGKS) provides a ligand contact to ATP. Ser107 functions as the Phosphoserine intermediate in the catalytic mechanism.

It belongs to the APS kinase family.

The enzyme catalyses adenosine 5'-phosphosulfate + ATP = 3'-phosphoadenylyl sulfate + ADP + H(+). It functions in the pathway sulfur metabolism; hydrogen sulfide biosynthesis; sulfite from sulfate: step 2/3. Functionally, catalyzes the synthesis of activated sulfate. The chain is Adenylyl-sulfate kinase from Bacillus licheniformis (strain ATCC 14580 / DSM 13 / JCM 2505 / CCUG 7422 / NBRC 12200 / NCIMB 9375 / NCTC 10341 / NRRL NRS-1264 / Gibson 46).